Reading from the N-terminus, the 252-residue chain is Probable transcriptional regulatory protein all4276 (252 aa).

The protein belongs to the TACO1 family.

The protein localises to the cytoplasm. The chain is Probable transcriptional regulatory protein all4276 from Nostoc sp. (strain PCC 7120 / SAG 25.82 / UTEX 2576).